Here is a 147-residue protein sequence, read N- to C-terminus: Hemoglobin subunit delta (147 aa).

Positions 3–147 constitute a Globin domain; the sequence is HLTPDEKNAV…VATALAHKYH (145 aa). Position 51 is a phosphoserine (Ser-51). Residues His-64 and His-93 each coordinate heme b.

The protein belongs to the globin family. As to quaternary structure, heterotetramer of two delta chains and two alpha chains. Red blood cells.

The protein is Hemoglobin subunit delta (HBD) of Otolemur crassicaudatus (Brown greater galago).